We begin with the raw amino-acid sequence, 648 residues long: Zinc finger protein 202 (648 aa).

Lys-22 participates in a covalent cross-link: Glycyl lysine isopeptide (Lys-Gly) (interchain with G-Cter in SUMO2). The SCAN box domain maps to His-46 to Gln-127. Residues Ser-146–Gly-221 form a disordered region. Positions Pro-165–Pro-182 are enriched in polar residues. The KRAB domain maps to Val-237–Glu-308. 2 consecutive C2H2-type zinc fingers follow at residues His-397–His-419 and Tyr-425–His-447. Residues Lys-454 and Lys-460 each participate in a glycyl lysine isopeptide (Lys-Gly) (interchain with G-Cter in SUMO2) cross-link. Position 466 is a phosphoserine (Ser-466). The segment at Tyr-481 to His-503 adopts a C2H2-type 3 zinc-finger fold. Residues Lys-507 and Lys-521 each participate in a glycyl lysine isopeptide (Lys-Gly) (interchain with G-Cter in SUMO2) cross-link. C2H2-type zinc fingers lie at residues Phe-509–His-531, Tyr-537–His-559, Tyr-565–His-587, Cys-593–His-615, and Phe-621–His-643.

As to quaternary structure, interacts with SDP1. Highly expressed in testis. Also expressed in breast carcinoma cell lines.

It is found in the nucleus. Functionally, transcriptional repressor that binds to elements found predominantly in genes that participate in lipid metabolism. Among its targets are structural components of lipoprotein particles (apolipoproteins AIV, CIII, and E), enzymes involved in lipid processing (lipoprotein lipase, lecithin cholesteryl ester transferase), transporters involved in lipid homeostasis (ABCA1, ABCG1), and several genes involved in processes related to energy metabolism and vascular disease. This Homo sapiens (Human) protein is Zinc finger protein 202 (ZNF202).